Reading from the N-terminus, the 189-residue chain is dTTP/UTP pyrophosphatase (189 aa).

Asp-70 acts as the Proton acceptor in catalysis.

This sequence belongs to the Maf family. YhdE subfamily. A divalent metal cation serves as cofactor.

It localises to the cytoplasm. The catalysed reaction is dTTP + H2O = dTMP + diphosphate + H(+). It catalyses the reaction UTP + H2O = UMP + diphosphate + H(+). Nucleoside triphosphate pyrophosphatase that hydrolyzes dTTP and UTP. May have a dual role in cell division arrest and in preventing the incorporation of modified nucleotides into cellular nucleic acids. The polypeptide is dTTP/UTP pyrophosphatase (Akkermansia muciniphila (strain ATCC BAA-835 / DSM 22959 / JCM 33894 / BCRC 81048 / CCUG 64013 / CIP 107961 / Muc)).